Reading from the N-terminus, the 337-residue chain is S-adenosylmethionine:tRNA ribosyltransferase-isomerase (337 aa).

This sequence belongs to the QueA family. In terms of assembly, monomer.

Its subcellular location is the cytoplasm. It carries out the reaction 7-aminomethyl-7-carbaguanosine(34) in tRNA + S-adenosyl-L-methionine = epoxyqueuosine(34) in tRNA + adenine + L-methionine + 2 H(+). The protein operates within tRNA modification; tRNA-queuosine biosynthesis. Functionally, transfers and isomerizes the ribose moiety from AdoMet to the 7-aminomethyl group of 7-deazaguanine (preQ1-tRNA) to give epoxyqueuosine (oQ-tRNA). The polypeptide is S-adenosylmethionine:tRNA ribosyltransferase-isomerase (Legionella pneumophila subsp. pneumophila (strain Philadelphia 1 / ATCC 33152 / DSM 7513)).